A 66-amino-acid chain; its full sequence is Regulator of G-protein signaling 6 (66 aa).

The 66-residue stretch at 1 to 66 folds into the RGS domain; sequence LAVQDLKKQP…EDAQEHIYKL (66 aa).

Interacts with GNB5. Interacts with RGS7BP, leading to regulate the subcellular location of the heterodimer formed with GNB5. Interacts with GNAI1.

It is found in the cytoplasm. The protein localises to the cytosol. It localises to the membrane. The protein resides in the nucleus. Its subcellular location is the cell membrane. Its function is as follows. Regulates G protein-coupled receptor signaling cascades. Inhibits signal transduction by increasing the GTPase activity of G protein alpha subunits, thereby driving them into their inactive GDP-bound form. The RGS6/GNB5 dimer enhances GNAO1 GTPase activity. The sequence is that of Regulator of G-protein signaling 6 (Rgs6) from Rattus norvegicus (Rat).